Here is a 160-residue protein sequence, read N- to C-terminus: Cytochrome b6-f complex subunit 4 (160 aa).

A run of 3 helical transmembrane segments spans residues 36–56 (LLYI…GLAV), 95–115 (LLGI…PFIE), and 131–151 (SVFL…CLPI).

This sequence belongs to the cytochrome b family. PetD subfamily. In terms of assembly, the 4 large subunits of the cytochrome b6-f complex are cytochrome b6, subunit IV (17 kDa polypeptide, PetD), cytochrome f and the Rieske protein, while the 4 small subunits are PetG, PetL, PetM and PetN. The complex functions as a dimer.

The protein resides in the cellular thylakoid membrane. Functionally, component of the cytochrome b6-f complex, which mediates electron transfer between photosystem II (PSII) and photosystem I (PSI), cyclic electron flow around PSI, and state transitions. This chain is Cytochrome b6-f complex subunit 4, found in Prochlorococcus marinus subsp. pastoris (strain CCMP1986 / NIES-2087 / MED4).